Reading from the N-terminus, the 96-residue chain is Small ribosomal subunit protein bS6 (96 aa).

The protein belongs to the bacterial ribosomal protein bS6 family.

Its function is as follows. Binds together with bS18 to 16S ribosomal RNA. The chain is Small ribosomal subunit protein bS6 (rpsF) from Streptomyces coelicolor (strain ATCC BAA-471 / A3(2) / M145).